Consider the following 291-residue polypeptide: Segregation and condensation protein B (291 aa).

This sequence belongs to the ScpB family. As to quaternary structure, homodimer. Homodimerization may be required to stabilize the binding of ScpA to the Smc head domains. Component of a cohesin-like complex composed of ScpA, ScpB and the Smc homodimer, in which ScpA and ScpB bind to the head domain of Smc. The presence of the three proteins is required for the association of the complex with DNA.

The protein localises to the cytoplasm. Participates in chromosomal partition during cell division. May act via the formation of a condensin-like complex containing Smc and ScpA that pull DNA away from mid-cell into both cell halves. In Mycoplasmoides gallisepticum (strain R(low / passage 15 / clone 2)) (Mycoplasma gallisepticum), this protein is Segregation and condensation protein B.